We begin with the raw amino-acid sequence, 145 residues long: Transcription antitermination protein NusB (145 aa).

This sequence belongs to the NusB family.

Involved in transcription antitermination. Required for transcription of ribosomal RNA (rRNA) genes. Binds specifically to the boxA antiterminator sequence of the ribosomal RNA (rrn) operons. This is Transcription antitermination protein NusB from Paraburkholderia phymatum (strain DSM 17167 / CIP 108236 / LMG 21445 / STM815) (Burkholderia phymatum).